We begin with the raw amino-acid sequence, 240 residues long: Tetrahydromethanopterin S-methyltransferase subunit A (240 aa).

The Cytoplasmic portion of the chain corresponds to 1–218 (MADKKEPAPG…KFHSGVHAGK (218 aa)). His-85 provides a ligand contact to 5-hydroxybenzimidazolylcob(I)amide. Residues 219 to 239 (IEGAMIGLTVTISLLGLLLLG) form a helical membrane-spanning segment. Position 240 (Arg-240) is a topological domain, extracellular.

The protein belongs to the MtrA family. The complex is composed of 8 subunits; MtrA, MtrB, MtrC, MtrD, MtrE, MtrF, MtrG and MtrH. It depends on 5-hydroxybenzimidazolylcob(I)amide as a cofactor.

It is found in the cell membrane. The enzyme catalyses 5-methyl-5,6,7,8-tetrahydromethanopterin + coenzyme M + 2 Na(+)(in) = 5,6,7,8-tetrahydromethanopterin + methyl-coenzyme M + 2 Na(+)(out). The protein operates within one-carbon metabolism; methanogenesis from CO(2); methyl-coenzyme M from 5,10-methylene-5,6,7,8-tetrahydromethanopterin: step 2/2. Functionally, part of a complex that catalyzes the formation of methyl-coenzyme M and tetrahydromethanopterin from coenzyme M and methyl-tetrahydromethanopterin. This is an energy-conserving, sodium-ion translocating step. This is Tetrahydromethanopterin S-methyltransferase subunit A from Methanosarcina barkeri (strain Fusaro / DSM 804).